The following is a 2309-amino-acid chain: Collagen alpha-4(VI) chain (2309 aa).

The signal sequence occupies residues 1-22 (MGTWKTFWLIISLAAGLGFVKS). The segment at 21–1410 (KSQRIVCREA…TCCNMYAKCY (1390 aa)) is nonhelical region. VWFA domains follow at residues 34–206 (DIVF…AQKL), 235–413 (DIVF…LQAL), 430–653 (DVVF…FQRV), 634–811 (DLVF…GNKL), 849–1018 (DIYF…IRDI), and 1030–1199 (DIIF…EKEI). Asparagine 188 is a glycosylation site (N-linked (GlcNAc...) asparagine). Asparagine 754 carries an N-linked (GlcNAc...) asparagine glycan. Residue asparagine 1114 is glycosylated (N-linked (GlcNAc...) asparagine). Residues 1411–1744 (GDDGIRGEPG…GKMGTKGSKG (334 aa)) form a triple-helical region region. Basic and acidic residues predominate over residues 1414–1430 (GIRGEPGSRGEQGERGL). A disordered region spans residues 1414–1746 (GIRGEPGSRG…MGTKGSKGLA (333 aa)). Residues 1480-1489 (GEEGVGGLDG) are compositionally biased toward gly residues. Positions 1527–1529 (RGD) match the Cell attachment site motif. 2 stretches are compositionally biased toward low complexity: residues 1605–1621 (PRGRQGPPGFFGQKGDP) and 1650–1669 (PAGERGPRGQQGPRGQPGLF). Residues 1745–2309 (LADRTPCEIV…EGECLNYVLK (565 aa)) are nonhelical region. VWFA domains lie at 1776-1957 (EVVF…ASCT) and 1982-2187 (DLVF…LNLL). Positions 2208 to 2210 (RGD) match the Cell attachment site motif. Positions 2262–2300 (ALGSHGKDRADTEDIDQETPAKGRHLGPTHGPCPMGPEE) are disordered.

This sequence belongs to the type VI collagen family. In terms of assembly, trimers composed of three different chains: alpha-1(VI), alpha-2(VI), and alpha-3(VI) or alpha-4(VI) or alpha-5(VI) or alpha-6(VI). Prolines at the third position of the tripeptide repeating unit (G-X-Y) are hydroxylated in some or all of the chains. As to expression, in newborn, it is expressed in lung, kidney, brain, intestine, skin, sternum and, at weak level, calvaria. In adult, it is almost absent with some weak expression in ovary and very weak expression in spleen, lung, uterus and brain.

The protein resides in the secreted. The protein localises to the extracellular space. It localises to the extracellular matrix. In terms of biological role, collagen VI acts as a cell-binding protein. This Mus musculus (Mouse) protein is Collagen alpha-4(VI) chain (Col6a4).